A 274-amino-acid polypeptide reads, in one-letter code: MQALQSIIDNAFEQRAEITPDNVEPQVRDAINNVIAQLDSGKLRVAEKINGQWVTHQWLKKAVLLSFRISHNQVIDGSESRYFDKVPMKFANYDQARFEKEGFRVVPPAAVRQGAYIARNTVLMPSYVNIGAYVDEGSMVDTWATVGSCAQIGKNVHLSGGVGIGGVLEPLQANPTIIEDNCFIGARSEIVEGVIVEEGSVISMGVYIGQSTKIYDRETGEIHYGRVPAGSVVVSGNLPSKDGRYSLYCAVIVKKVDAKTRGKVGINELLRTID.

It belongs to the transferase hexapeptide repeat family.

The protein localises to the cytoplasm. It carries out the reaction (S)-2,3,4,5-tetrahydrodipicolinate + succinyl-CoA + H2O = (S)-2-succinylamino-6-oxoheptanedioate + CoA. Its pathway is amino-acid biosynthesis; L-lysine biosynthesis via DAP pathway; LL-2,6-diaminopimelate from (S)-tetrahydrodipicolinate (succinylase route): step 1/3. This is 2,3,4,5-tetrahydropyridine-2,6-dicarboxylate N-succinyltransferase from Proteus mirabilis (strain HI4320).